The primary structure comprises 187 residues: Elongation factor P (187 aa).

It belongs to the elongation factor P family.

It is found in the cytoplasm. Its pathway is protein biosynthesis; polypeptide chain elongation. Involved in peptide bond synthesis. Stimulates efficient translation and peptide-bond synthesis on native or reconstituted 70S ribosomes in vitro. Probably functions indirectly by altering the affinity of the ribosome for aminoacyl-tRNA, thus increasing their reactivity as acceptors for peptidyl transferase. In Desulfosudis oleivorans (strain DSM 6200 / JCM 39069 / Hxd3) (Desulfococcus oleovorans), this protein is Elongation factor P.